A 231-amino-acid chain; its full sequence is Small ribosomal subunit protein uS3 (231 aa).

The 69-residue stretch at 39 to 107 (VREFLKEKLK…PAQINIAEVR (69 aa)) folds into the KH type-2 domain.

Belongs to the universal ribosomal protein uS3 family. As to quaternary structure, part of the 30S ribosomal subunit. Forms a tight complex with proteins S10 and S14.

Its function is as follows. Binds the lower part of the 30S subunit head. Binds mRNA in the 70S ribosome, positioning it for translation. The polypeptide is Small ribosomal subunit protein uS3 (Colwellia psychrerythraea (strain 34H / ATCC BAA-681) (Vibrio psychroerythus)).